Consider the following 379-residue polypeptide: MTNIRKTHPLLKPINHALIDLPTPSNISTWWNLGSLLGTCLIMQILTGLFLAMHYSSDTTTAFSSIAHICRDVNYGWTIRHLHANGASMFFMCLYLHIGRNLYYGSYSYLETWNTGVMLLLTVMATAFMGYVLPWGQMSFWGATVITNLLSAIPYIGTDLVEWIWGGFSIEKATLTRFFTLHFIAPFIILALVLTHLLFLHETGSNNPLGISSNSDKIPFHPYHTIKDILGLLIMILTTLALTLLHPDLLGDPNNYTPANPLNTPPHIKPEWYFLFAYTILRSTPSKLGGVLTLICSILVLVIIPMTHTAKQRSLTFRPISQCLFWILTADLLILTWIGGQPMDPPFTTIGLLASILYFTTILILTPTAGLIENNLMKW.

A run of 4 helical transmembrane segments spans residues 33-53, 77-98, 113-133, and 178-198; these read LGSL…FLAM, WTIR…YLHI, WNTG…GYVL, and FFTL…THLL. His-83 and His-97 together coordinate heme b. His-182 and His-196 together coordinate heme b. Residue His-201 participates in a ubiquinone binding. Transmembrane regions (helical) follow at residues 226-246, 288-308, 320-340, and 347-367; these read IKDI…TLLH, LGGV…PMTH, ISQC…WIGG, and FTTI…ILTP.

It belongs to the cytochrome b family. In terms of assembly, the cytochrome bc1 complex contains 11 subunits: 3 respiratory subunits (MT-CYB, CYC1 and UQCRFS1), 2 core proteins (UQCRC1 and UQCRC2) and 6 low-molecular weight proteins (UQCRH/QCR6, UQCRB/QCR7, UQCRQ/QCR8, UQCR10/QCR9, UQCR11/QCR10 and a cleavage product of UQCRFS1). This cytochrome bc1 complex then forms a dimer. It depends on heme b as a cofactor.

The protein resides in the mitochondrion inner membrane. In terms of biological role, component of the ubiquinol-cytochrome c reductase complex (complex III or cytochrome b-c1 complex) that is part of the mitochondrial respiratory chain. The b-c1 complex mediates electron transfer from ubiquinol to cytochrome c. Contributes to the generation of a proton gradient across the mitochondrial membrane that is then used for ATP synthesis. The protein is Cytochrome b (MT-CYB) of Bradypus tridactylus (Pale-throated three-toed sloth).